Here is a 137-residue protein sequence, read N- to C-terminus: Probable 4-amino-4-deoxy-L-arabinose-phosphoundecaprenol flippase subunit ArnF (137 aa).

Residues 1-3 lie on the Cytoplasmic side of the membrane; sequence MNA. Residues 4–24 form a helical membrane-spanning segment; it reads LRGWLAALGSMLLASAAQLGM. Over 25–44 the chain is Periplasmic; sequence RWGMSRLPLPEAWAGQTPER. Residues 45–65 form a helical membrane-spanning segment; that stretch reads AALLAVALAVAAYAASLLCWL. Over 66 to 76 the chain is Cytoplasmic; that stretch reads AALRHLPLGRA. The helical transmembrane segment at 77 to 97 threads the bilayer; that stretch reads YSLLSASYALVYLLAASLPAF. Topologically, residues 98–100 are periplasmic; the sequence is DET. The chain crosses the membrane as a helical span at residues 101 to 121; the sequence is FSTSKILGVGLVVLGVLTVNA. Residues 122–137 are Cytoplasmic-facing; that stretch reads RRTAAAPAHHPSRKAP.

Belongs to the ArnF family. In terms of assembly, heterodimer of ArnE and ArnF.

Its subcellular location is the cell inner membrane. It functions in the pathway bacterial outer membrane biogenesis; lipopolysaccharide biosynthesis. Its function is as follows. Translocates 4-amino-4-deoxy-L-arabinose-phosphoundecaprenol (alpha-L-Ara4N-phosphoundecaprenol) from the cytoplasmic to the periplasmic side of the inner membrane. In Pseudomonas aeruginosa (strain LESB58), this protein is Probable 4-amino-4-deoxy-L-arabinose-phosphoundecaprenol flippase subunit ArnF.